Reading from the N-terminus, the 64-residue chain is Alpha-conotoxin-like Ai1.2 (64 aa).

The N-terminal stretch at 1 to 17 (MFTVFLLVVLATTVVSS) is a signal peptide. The propeptide occupies 18–43 (TSGRRAFRGRNAAAKASGLVGLTDRR). 2 disulfide bridges follow: Cys46-Cys52 and Cys47-Cys60. A ser-Xaa-Pro motif, crucial for potent interaction with nAChR region spans residues 48–50 (SDP). Gly61 carries the post-translational modification Glycine amide.

The protein belongs to the conotoxin A superfamily. In terms of tissue distribution, expressed by the venom duct.

Its subcellular location is the secreted. Its function is as follows. Alpha-conotoxins act on postsynaptic membranes, they bind to the nicotinic acetylcholine receptors (nAChR) and thus inhibit them. The sequence is that of Alpha-conotoxin-like Ai1.2 from Conus ammiralis (Admiral cone).